A 285-amino-acid chain; its full sequence is Bifunctional protein FolD (285 aa).

Residues 165-167 (GRS) and S190 each bind NADP(+).

It belongs to the tetrahydrofolate dehydrogenase/cyclohydrolase family. In terms of assembly, homodimer.

The enzyme catalyses (6R)-5,10-methylene-5,6,7,8-tetrahydrofolate + NADP(+) = (6R)-5,10-methenyltetrahydrofolate + NADPH. The catalysed reaction is (6R)-5,10-methenyltetrahydrofolate + H2O = (6R)-10-formyltetrahydrofolate + H(+). Its pathway is one-carbon metabolism; tetrahydrofolate interconversion. In terms of biological role, catalyzes the oxidation of 5,10-methylenetetrahydrofolate to 5,10-methenyltetrahydrofolate and then the hydrolysis of 5,10-methenyltetrahydrofolate to 10-formyltetrahydrofolate. This Staphylococcus haemolyticus (strain JCSC1435) protein is Bifunctional protein FolD.